A 108-amino-acid chain; its full sequence is MSRAKGAKAEEIGALFLQDLGYKIIDRNFYAPFGEIDIIAQKGGVLHFVEVKSGANFEPIYNITPLKLSRIIKSAQYYLKQKKITPPFCVDALILRGGEVEFIENITL.

It belongs to the UPF0102 family.

This is UPF0102 protein WS0451 from Wolinella succinogenes (strain ATCC 29543 / DSM 1740 / CCUG 13145 / JCM 31913 / LMG 7466 / NCTC 11488 / FDC 602W) (Vibrio succinogenes).